A 481-amino-acid polypeptide reads, in one-letter code: 2-succinylbenzoate--CoA ligase (481 aa).

This sequence belongs to the ATP-dependent AMP-binding enzyme family. MenE subfamily.

The catalysed reaction is 2-succinylbenzoate + ATP + CoA = 2-succinylbenzoyl-CoA + AMP + diphosphate. It functions in the pathway quinol/quinone metabolism; 1,4-dihydroxy-2-naphthoate biosynthesis; 1,4-dihydroxy-2-naphthoate from chorismate: step 5/7. It participates in quinol/quinone metabolism; menaquinone biosynthesis. In terms of biological role, converts 2-succinylbenzoate (OSB) to 2-succinylbenzoyl-CoA (OSB-CoA). The protein is 2-succinylbenzoate--CoA ligase of Bacillus cytotoxicus (strain DSM 22905 / CIP 110041 / 391-98 / NVH 391-98).